A 545-amino-acid polypeptide reads, in one-letter code: Chromosomal replication initiator protein DnaA (545 aa).

The interval 1 to 72 is domain I, interacts with DnaA modulators; sequence MNDFWQHCSA…DMARDFWQAP (72 aa). Residues 72–208 form a domain II region; sequence PVDVQFVLDP…GETDSMYERS (137 aa). Over residues 90–105 the composition is skewed to low complexity; the sequence is AAAPAPASARPASAPG. 2 disordered regions span residues 90–112 and 181–204; these read AAAP…GSAG and AAAR…TDSM. Polar residues predominate over residues 189-201; the sequence is PGQSASSNGNGET. The segment at 209–425 is domain III, AAA+ region; it reads KLNPVLTFDN…GALRKILAYS (217 aa). Residues glycine 253, glycine 255, lysine 256, and threonine 257 each coordinate ATP. The tract at residues 426 to 545 is domain IV, binds dsDNA; sequence KFHGREITIE…LHVLEQTLKG (120 aa).

It belongs to the DnaA family. Oligomerizes as a right-handed, spiral filament on DNA at oriC.

It localises to the cytoplasm. Its function is as follows. Plays an essential role in the initiation and regulation of chromosomal replication. ATP-DnaA binds to the origin of replication (oriC) to initiate formation of the DNA replication initiation complex once per cell cycle. Binds the DnaA box (a 9 base pair repeat at the origin) and separates the double-stranded (ds)DNA. Forms a right-handed helical filament on oriC DNA; dsDNA binds to the exterior of the filament while single-stranded (ss)DNA is stabiized in the filament's interior. The ATP-DnaA-oriC complex binds and stabilizes one strand of the AT-rich DNA unwinding element (DUE), permitting loading of DNA polymerase. After initiation quickly degrades to an ADP-DnaA complex that is not apt for DNA replication. Binds acidic phospholipids. The polypeptide is Chromosomal replication initiator protein DnaA (Paraburkholderia phytofirmans (strain DSM 17436 / LMG 22146 / PsJN) (Burkholderia phytofirmans)).